The sequence spans 491 residues: Anhydromuropeptide permease (491 aa).

Topologically, residues Met-1–Gln-11 are cytoplasmic. The chain crosses the membrane as a helical span at residues Pro-12–Ser-32. Residues Gly-33–Lys-47 are Periplasmic-facing. The chain crosses the membrane as a helical span at residues Thr-48–Phe-61. At Lys-62–Arg-81 the chain is on the cytoplasmic side. The helical transmembrane segment at Gly-82–Thr-105 threads the bilayer. Residue Gln-106 is a topological domain, periplasmic. A helical membrane pass occupies residues Leu-107–Gln-124. Over Asp-125–Arg-221 the chain is Cytoplasmic. A helical transmembrane segment spans residues Asn-222–Phe-240. Residues Ala-241–Asn-264 are Periplasmic-facing. A helical transmembrane segment spans residues Lys-265–Gln-284. At Arg-285–Ser-287 the chain is on the cytoplasmic side. Residues Leu-288–Asn-303 form a helical membrane-spanning segment. Residues Ala-304–Asn-327 lie on the Periplasmic side of the membrane. Residues Leu-328 to Asn-346 traverse the membrane as a helical segment. Over Lys-347–Tyr-421 the chain is Cytoplasmic. A helical membrane pass occupies residues Pro-422–Leu-453. The Periplasmic segment spans residues Thr-454 to Ser-457. A helical membrane pass occupies residues Phe-458–Leu-485. Topologically, residues Arg-486–Thr-491 are cytoplasmic.

Belongs to the major facilitator superfamily.

The protein resides in the cell inner membrane. Its function is as follows. Permease involved in cell wall peptidoglycan recycling. Transports, from the periplasm into the cytoplasm, the disaccharide N-acetylglucosaminyl-beta-1,4-anhydro-N-acetylmuramic acid (GlcNAc-anhMurNAc) and GlcNAc-anhMurNAc-peptides. Transport is dependent on the proton motive force. The sequence is that of Anhydromuropeptide permease (ampG) from Escherichia coli O157:H7.